Reading from the N-terminus, the 149-residue chain is Proline-rich acidic protein 1 (149 aa).

The signal sequence occupies residues 1 to 20; that stretch reads MKRFLLATCLVAALLWEAGA. Disordered regions lie at residues 51–79 and 97–122; these read EPLE…KRPD and LQGP…EVPQ. Residues 66 to 79 are compositionally biased toward basic and acidic residues; the sequence is PKQKPAAAEEKRPD.

In terms of assembly, interacts with MTTP. Interacts with MAD1L1. In terms of tissue distribution, predominantly expressed in the intestinal epithelial cells than in the liver (at protein level). Abundantly expressed in the uterus during late pregnancy by uterus epithelial cells. After birth expression rapidly decreases and is no longer found in the uterus by the third day. Also highly expressed in the small intestine where it shows a proximal-distal graded expression.

The protein resides in the secreted. Its subcellular location is the endoplasmic reticulum. Functionally, lipid-binding protein which promotes lipid absorption by facilitating MTTP-mediated lipid transfer (mainly triglycerides and phospholipids) and MTTP-mediated apoB lipoprotein assembly and secretion. Protects the gastrointestinal epithelium from irradiation-induced apoptosis. May play an important role in maintaining normal growth homeostasis in epithelial cells. Involved in p53/TP53-dependent cell survival after DNA damage. The sequence is that of Proline-rich acidic protein 1 (Prap1) from Mus musculus (Mouse).